The chain runs to 845 residues: Protein translocase subunit SecA (845 aa).

Residues Gln-85, Gly-103 to Thr-107, and Asp-492 each bind ATP. The segment at Arg-787–Ala-845 is disordered. Zn(2+) contacts are provided by Cys-829, Cys-831, Cys-840, and His-841. The span at Lys-835–Ala-845 shows a compositional bias: basic residues.

This sequence belongs to the SecA family. Monomer and homodimer. Part of the essential Sec protein translocation apparatus which comprises SecA, SecYEG and auxiliary proteins SecDF. Other proteins may also be involved. Zn(2+) is required as a cofactor.

It localises to the cell membrane. The protein resides in the cytoplasm. It catalyses the reaction ATP + H2O + cellular proteinSide 1 = ADP + phosphate + cellular proteinSide 2.. In terms of biological role, part of the Sec protein translocase complex. Interacts with the SecYEG preprotein conducting channel. Has a central role in coupling the hydrolysis of ATP to the transfer of proteins into and across the cell membrane, serving as an ATP-driven molecular motor driving the stepwise translocation of polypeptide chains across the membrane. The polypeptide is Protein translocase subunit SecA (Enterococcus faecalis (strain ATCC 700802 / V583)).